The primary structure comprises 348 residues: Holliday junction branch migration complex subunit RuvB (348 aa).

The large ATPase domain (RuvB-L) stretch occupies residues 4–186 (TDRIISANTV…FGIIQRLEFY (183 aa)). Residues I25, R26, G67, K70, T71, T72, 133-135 (EDY), R176, Y186, and R223 each bind ATP. T71 provides a ligand contact to Mg(2+). The tract at residues 187-257 (SVDDLAKIVY…IADKALTMLK (71 aa)) is small ATPAse domain (RuvB-S). Positions 260-348 (PVGFDHMDHK…SSDQQQNLSL (89 aa)) are head domain (RuvB-H). Residues R315 and R320 each coordinate DNA.

This sequence belongs to the RuvB family. As to quaternary structure, homohexamer. Forms an RuvA(8)-RuvB(12)-Holliday junction (HJ) complex. HJ DNA is sandwiched between 2 RuvA tetramers; dsDNA enters through RuvA and exits via RuvB. An RuvB hexamer assembles on each DNA strand where it exits the tetramer. Each RuvB hexamer is contacted by two RuvA subunits (via domain III) on 2 adjacent RuvB subunits; this complex drives branch migration. In the full resolvosome a probable DNA-RuvA(4)-RuvB(12)-RuvC(2) complex forms which resolves the HJ.

It localises to the cytoplasm. It catalyses the reaction ATP + H2O = ADP + phosphate + H(+). In terms of biological role, the RuvA-RuvB-RuvC complex processes Holliday junction (HJ) DNA during genetic recombination and DNA repair, while the RuvA-RuvB complex plays an important role in the rescue of blocked DNA replication forks via replication fork reversal (RFR). RuvA specifically binds to HJ cruciform DNA, conferring on it an open structure. The RuvB hexamer acts as an ATP-dependent pump, pulling dsDNA into and through the RuvAB complex. RuvB forms 2 homohexamers on either side of HJ DNA bound by 1 or 2 RuvA tetramers; 4 subunits per hexamer contact DNA at a time. Coordinated motions by a converter formed by DNA-disengaged RuvB subunits stimulates ATP hydrolysis and nucleotide exchange. Immobilization of the converter enables RuvB to convert the ATP-contained energy into a lever motion, pulling 2 nucleotides of DNA out of the RuvA tetramer per ATP hydrolyzed, thus driving DNA branch migration. The RuvB motors rotate together with the DNA substrate, which together with the progressing nucleotide cycle form the mechanistic basis for DNA recombination by continuous HJ branch migration. Branch migration allows RuvC to scan DNA until it finds its consensus sequence, where it cleaves and resolves cruciform DNA. This Francisella philomiragia subsp. philomiragia (strain ATCC 25017 / CCUG 19701 / FSC 153 / O#319-036) protein is Holliday junction branch migration complex subunit RuvB.